The sequence spans 30 residues: Protein ScvA (30 aa).

The interval 1–30 (MERQNVQQQRGKDQRPQRPGASNPRRPNQR) is disordered.

In terms of biological role, might be involved in DNA-binding; the protein binds DNA in gel-shift assays and immunogold electron microscopy shows labelling of condensed chromatin. In Coxiella burnetii (strain RSA 493 / Nine Mile phase I), this protein is Protein ScvA (scvA).